A 423-amino-acid chain; its full sequence is Gamma-glutamyl phosphate reductase (423 aa).

The protein belongs to the gamma-glutamyl phosphate reductase family.

The protein localises to the cytoplasm. It carries out the reaction L-glutamate 5-semialdehyde + phosphate + NADP(+) = L-glutamyl 5-phosphate + NADPH + H(+). The protein operates within amino-acid biosynthesis; L-proline biosynthesis; L-glutamate 5-semialdehyde from L-glutamate: step 2/2. Functionally, catalyzes the NADPH-dependent reduction of L-glutamate 5-phosphate into L-glutamate 5-semialdehyde and phosphate. The product spontaneously undergoes cyclization to form 1-pyrroline-5-carboxylate. The chain is Gamma-glutamyl phosphate reductase from Burkholderia vietnamiensis (strain G4 / LMG 22486) (Burkholderia cepacia (strain R1808)).